The following is a 490-amino-acid chain: Cis-aconitate decarboxylase (490 aa).

It belongs to the PrpD family.

It localises to the mitochondrion. The enzyme catalyses cis-aconitate + H(+) = itaconate + CO2. Involved in the production of itaconic acid, a soluble unsaturated dicarboxylic acid mainly produced from sugars. This chain is Cis-aconitate decarboxylase (cad1), found in Aspergillus terreus.